We begin with the raw amino-acid sequence, 879 residues long: Prostaglandin F2 receptor negative regulator (879 aa).

Positions 1-25 (MGRLASRPLLLALLSLALCRGRVVR) are cleaved as a signal peptide. 2 consecutive Ig-like C2-type domains span residues 26–129 (VPTA…ATVQ) and 149–268 (PSAR…KAVE). Over 26 to 832 (VPTATLVRVV…MDVLNAFKYP (807 aa)) the chain is Extracellular. Intrachain disulfides connect cysteine 43–cysteine 119 and cysteine 169–cysteine 247. Asparagine 44 carries N-linked (GlcNAc...) asparagine glycosylation. At threonine 271 the chain carries Phosphothreonine. Ig-like C2-type domains lie at 276-394 (PSVL…EAVS), 406-536 (PDYQ…DVFS), 544-662 (ALED…AWSP), and 688-813 (PIFN…AEIH). 4 N-linked (GlcNAc...) asparagine glycosylation sites follow: asparagine 286, asparagine 300, asparagine 383, and asparagine 413. Residues cysteine 299 and cysteine 373 are joined by a disulfide bond. The Endoplasmic reticulum retention signal signature appears at 424-427 (PTEL). Residues cysteine 429 and cysteine 515 are joined by a disulfide bond. Residues asparagine 525, asparagine 600, asparagine 618, and asparagine 691 are each glycosylated (N-linked (GlcNAc...) asparagine). Cysteine 571 and cysteine 655 form a disulfide bridge. Positions 703–705 (RGD) match the Cell attachment site motif. Cysteine 711 and cysteine 793 are oxidised to a cystine. Residues 833-853 (LLIGVGLSTVIGLLSCLIGYC) traverse the membrane as a helical segment. Topologically, residues 854–879 (SSHWCCKKEVQETRRERRRLMSMEMD) are cytoplasmic.

In terms of assembly, interacts with CD9 and CD81. Part of a complex composed of CD9, CD81 and IGSF8. Also seems to interact with CD63, CD82 and CD151.

The protein localises to the endoplasmic reticulum membrane. The protein resides in the golgi apparatus. It is found in the trans-Golgi network membrane. In terms of biological role, inhibits the binding of prostaglandin F2-alpha (PGF2-alpha) to its specific FP receptor, by decreasing the receptor number rather than the affinity constant. Functional coupling with the prostaglandin F2-alpha receptor seems to occur. In myoblasts, associates with tetraspanins CD9 and CD81 to prevent myotube fusion during muscle regeneration. In Homo sapiens (Human), this protein is Prostaglandin F2 receptor negative regulator (PTGFRN).